Reading from the N-terminus, the 336-residue chain is Syntaxin-31 (336 aa).

Over 1-314 (MGSTFRDRTV…QHLTRISSNR (314 aa)) the chain is Cytoplasmic. Disordered regions lie at residues 23–53 (GAIP…KASR) and 152–218 (RSEN…SQLR). Residues 154 to 163 (ENMKAHENRK) show a composition bias toward basic and acidic residues. A compositionally biased stretch (polar residues) spans 164 to 181 (QLFSTKNAVDSPPQNNAK). Residues 190–202 (SSSSNPFGNLQQP) show a composition bias toward low complexity. Positions 244-306 (ENYSQSRAVA…EGARSALLQH (63 aa)) constitute a t-SNARE coiled-coil homology domain. The chain crosses the membrane as a helical; Anchor for type IV membrane protein span at residues 315–335 (WLMMKIFAVIILFLIVFLFFV). A topological domain (vesicular) is located at residue Ala336.

It belongs to the syntaxin family. Part of the t-SNARE complex. Interacts with CDC48A, but not with VPS45.

The protein localises to the golgi apparatus. Its subcellular location is the cis-Golgi network membrane. It localises to the cytoplasm. The protein resides in the endosome. Its function is as follows. Vesicle trafficking protein that functions in the secretory pathway. This Arabidopsis thaliana (Mouse-ear cress) protein is Syntaxin-31 (SYP31).